We begin with the raw amino-acid sequence, 226 residues long: Phosphate propanoyltransferase (226 aa).

Position 44 to 46 (44 to 46) interacts with CoA; sequence VSN. Zn(2+)-binding residues include His48 and His50. Positions 72, 90, and 97 each coordinate CoA. Arg103 lines the phosphate pocket. Glu109 serves as a coordination point for Zn(2+). Residue Phe116 coordinates CoA. 3 residues coordinate Zn(2+): His157, His159, and His204. Asn211 serves as a coordination point for CoA.

The protein belongs to the PduL family. In terms of assembly, full-length protein forms large oligomers. Homodimer, when purified in the absence of the encapsulation peptide (EP, residues 1-47). The EP may influence oligomerization. Requires Zn(2+) as cofactor.

It is found in the bacterial microcompartment. The enzyme catalyses propanoyl-CoA + phosphate = propanoyl phosphate + CoA. It participates in polyol metabolism; 1,2-propanediol degradation. In terms of biological role, involved in 1,2-propanediol (1,2-PD) utilization within the bacterial microcompartment (BMC) dedicated to 1,2-PD degradation by catalyzing the conversion of propanoyl-CoA to propanoyl-phosphate. CoA is regenerated within the pdu BMC (for use by PduP) via this enzyme, although there must also be cofactor transport across the BMC. Directly targeted to the BMC. Phosphate is probably the first substrate to bind in the forward direction. CoA is probably the first substrate to bind in the reverse direction, and might bind to the enzyme as the BMC assembles, ensuring cofactor encapsulation. The sequence is that of Phosphate propanoyltransferase from Rhodopseudomonas palustris (strain BisB18).